Consider the following 249-residue polypeptide: Probable transcriptional regulatory protein Sare_1779 (249 aa).

It belongs to the TACO1 family.

The protein resides in the cytoplasm. The polypeptide is Probable transcriptional regulatory protein Sare_1779 (Salinispora arenicola (strain CNS-205)).